A 598-amino-acid chain; its full sequence is Aspartate--tRNA(Asp/Asn) ligase (598 aa).

Glu177 contacts L-aspartate. The tract at residues 201–204 (QLFK) is aspartate. Arg223 is a binding site for L-aspartate. Residues 223–225 (RDE) and Gln232 each bind ATP. His456 contributes to the L-aspartate binding site. Residue Glu493 coordinates ATP. Arg500 lines the L-aspartate pocket. 545-548 (GLDR) is an ATP binding site.

This sequence belongs to the class-II aminoacyl-tRNA synthetase family. Type 1 subfamily. As to quaternary structure, homodimer.

The protein localises to the cytoplasm. The enzyme catalyses tRNA(Asx) + L-aspartate + ATP = L-aspartyl-tRNA(Asx) + AMP + diphosphate. Aspartyl-tRNA synthetase with relaxed tRNA specificity since it is able to aspartylate not only its cognate tRNA(Asp) but also tRNA(Asn). Reaction proceeds in two steps: L-aspartate is first activated by ATP to form Asp-AMP and then transferred to the acceptor end of tRNA(Asp/Asn). This Prochlorococcus marinus (strain MIT 9215) protein is Aspartate--tRNA(Asp/Asn) ligase.